A 269-amino-acid chain; its full sequence is Transmembrane protein 41B (269 aa).

The next 6 membrane-spanning stretches (helical) occupy residues 30–50, 87–107, 125–147, 175–195, 203–223, and 240–260; these read TSLLILVSIFTIAAFLMFLVY, FYVQVLVAYFATYVFLQTFAI, LALFLVCLCSGLGASFCYMLSYL, LINYIIFLRITPFLPNWFINI, PLKVFFIGTFLGVAPPSFVAI, and SWNSLFVLMILAILSILPALF. The interval 118 to 229 is VTT domain; required for its function in autophagy; sequence GFLYPFPLAL…FVAIKAGTTL (112 aa).

It belongs to the TMEM41 family.

Its subcellular location is the endoplasmic reticulum membrane. The protein localises to the endomembrane system. It catalyses the reaction a 1,2-diacyl-sn-glycero-3-phospho-L-serine(in) = a 1,2-diacyl-sn-glycero-3-phospho-L-serine(out). The enzyme catalyses cholesterol(in) = cholesterol(out). The catalysed reaction is a 1,2-diacyl-sn-glycero-3-phosphocholine(in) = a 1,2-diacyl-sn-glycero-3-phosphocholine(out). It carries out the reaction a 1,2-diacyl-sn-glycero-3-phosphoethanolamine(in) = a 1,2-diacyl-sn-glycero-3-phosphoethanolamine(out). Functionally, phospholipid scramblase involved in lipid homeostasis and membrane dynamics processes. Has phospholipid scramblase activity toward cholesterol and phosphatidylserine, as well as phosphatidylethanolamine and phosphatidylcholine. Required for autophagosome formation: participates in early stages of autophagosome biogenesis at the endoplasmic reticulum (ER) membrane by reequilibrating the leaflets of the ER as lipids are extracted by ATG2 (ATG2A or ATG2B) to mediate autophagosome assembly. In addition to autophagy, involved in other processes in which phospholipid scramblase activity is required. Required for normal motor neuron development. This Gallus gallus (Chicken) protein is Transmembrane protein 41B.